A 302-amino-acid polypeptide reads, in one-letter code: Thioredoxin-like protein CDSP32, chloroplastic (302 aa).

A chloroplast-targeting transit peptide spans 1-56; sequence MATVANFLAKPISTVVPRPSSAVASTSSFVFFNHKTNPLFRRKNLPKRLFSAVKIK. The Thioredoxin domain maps to 163 to 298; the sequence is HEEEGIEPDQ…IGEILRYSGV (136 aa). Catalysis depends on nucleophile residues cysteine 219 and cysteine 222. Cysteine 219 and cysteine 222 are disulfide-bonded.

Belongs to the thioredoxin family. Interacts with the plastidial peroxiredoxin BAS1.

Its subcellular location is the plastid. It localises to the chloroplast stroma. Its function is as follows. Probable thiol-disulfide oxidoreductase involved in resistance to oxidative stress. May participate in the reduction of alkyl hydroperoxides derived from oxidative stress by acting as a physiological electron donor to the BAS1 peroxiredoxin. May regenerate methionine sulfoxide reductase B1 (MSRB1) activity through sulfenic acid reduction. The chain is Thioredoxin-like protein CDSP32, chloroplastic (CDSP32) from Arabidopsis thaliana (Mouse-ear cress).